The primary structure comprises 270 residues: Secreted RxLR effector protein 149 (270 aa).

Residues 1 to 21 (MRNGVVLFGLFFIGYSSCVLA) form the signal peptide. Residues 43 to 58 (RTLQADDPERILAEER) carry the RxLR-dEER motif.

It belongs to the RxLR effector family.

It localises to the secreted. It is found in the host nucleus. Its subcellular location is the host cytoplasm. Its function is as follows. Secreted effector that completely suppresses the host cell death induced by cell death-inducing proteins. The protein is Secreted RxLR effector protein 149 of Plasmopara viticola (Downy mildew of grapevine).